Here is a 692-residue protein sequence, read N- to C-terminus: Hexamerin-1.1 (692 aa).

A signal peptide spans 1-18 (MKLLILAVAISLAVLASG). The N-linked (GlcNAc...) asparagine glycan is linked to Asn-203.

This sequence belongs to the hemocyanin family. In terms of assembly, homohexamer. Larval fat body.

The protein resides in the secreted. It is found in the extracellular space. Larval storage protein (LSP) which may serve as a store of amino acids for synthesis of adult proteins. This is Hexamerin-1.1 (HexA) from Anopheles gambiae (African malaria mosquito).